The following is a 424-amino-acid chain: GTPase Obg (424 aa).

The Obg domain maps to 1–158 (MFIDTAKIFV…RWIKLELKLL (158 aa)). The region spanning 159–331 (ADVGLIGFPN…LMKEAARLLS (173 aa)) is the OBG-type G domain. GTP-binding positions include 165–172 (GFPNVGKS), 190–194 (FTTLK), 212–215 (DIPG), 282–285 (NKSD), and 312–314 (SAA). The Mg(2+) site is built by Ser-172 and Thr-192. The OCT domain maps to 345 to 424 (RFIEEEKRFT…LNDFEFDFLL (80 aa)).

Belongs to the TRAFAC class OBG-HflX-like GTPase superfamily. OBG GTPase family. Monomer. Mg(2+) is required as a cofactor.

It is found in the cytoplasm. An essential GTPase which binds GTP, GDP and possibly (p)ppGpp with moderate affinity, with high nucleotide exchange rates and a fairly low GTP hydrolysis rate. Plays a role in control of the cell cycle, stress response, ribosome biogenesis and in those bacteria that undergo differentiation, in morphogenesis control. The polypeptide is GTPase Obg (Clostridium botulinum (strain ATCC 19397 / Type A)).